The chain runs to 116 residues: NADH-ubiquinone oxidoreductase chain 3 (116 aa).

A run of 3 helical transmembrane segments spans residues 3-23, 56-76, and 85-105; these read LVIS…VVSF, FFLV…LLAL, and ATGT…GLIY.

The protein belongs to the complex I subunit 3 family.

It localises to the mitochondrion membrane. It carries out the reaction a ubiquinone + NADH + 5 H(+)(in) = a ubiquinol + NAD(+) + 4 H(+)(out). Functionally, core subunit of the mitochondrial membrane respiratory chain NADH dehydrogenase (Complex I) that is believed to belong to the minimal assembly required for catalysis. Complex I functions in the transfer of electrons from NADH to the respiratory chain. The immediate electron acceptor for the enzyme is believed to be ubiquinone. The chain is NADH-ubiquinone oxidoreductase chain 3 (MT-ND3) from Formosania lacustris (Oriental stream loach).